The primary structure comprises 258 residues: Ditrans,polycis-undecaprenyl-diphosphate synthase ((2E,6E)-farnesyl-diphosphate specific) (258 aa).

The active site involves Asp24. A Mg(2+)-binding site is contributed by Asp24. Substrate contacts are provided by residues Gly25–Arg28, Trp29, Arg37, His41, and Ser69–Glu71. The active-site Proton acceptor is Asn72. Residues Trp73, Arg75, Arg192, and Arg198–Ser200 contribute to the substrate site. Residue Glu211 participates in Mg(2+) binding.

The protein belongs to the UPP synthase family. As to quaternary structure, homodimer. It depends on Mg(2+) as a cofactor.

It catalyses the reaction 8 isopentenyl diphosphate + (2E,6E)-farnesyl diphosphate = di-trans,octa-cis-undecaprenyl diphosphate + 8 diphosphate. Functionally, catalyzes the sequential condensation of isopentenyl diphosphate (IPP) with (2E,6E)-farnesyl diphosphate (E,E-FPP) to yield (2Z,6Z,10Z,14Z,18Z,22Z,26Z,30Z,34E,38E)-undecaprenyl diphosphate (di-trans,octa-cis-UPP). UPP is the precursor of glycosyl carrier lipid in the biosynthesis of bacterial cell wall polysaccharide components such as peptidoglycan and lipopolysaccharide. This Xanthomonas oryzae pv. oryzae (strain KACC10331 / KXO85) protein is Ditrans,polycis-undecaprenyl-diphosphate synthase ((2E,6E)-farnesyl-diphosphate specific).